A 148-amino-acid polypeptide reads, in one-letter code: 3-dehydroquinate dehydratase (148 aa).

Y23 functions as the Proton acceptor in the catalytic mechanism. Residues N75, H81, and D88 each coordinate substrate. Catalysis depends on H101, which acts as the Proton donor. Substrate contacts are provided by residues 102–103 and R112; that span reads LS.

It belongs to the type-II 3-dehydroquinase family. In terms of assembly, homododecamer.

The enzyme catalyses 3-dehydroquinate = 3-dehydroshikimate + H2O. Its pathway is metabolic intermediate biosynthesis; chorismate biosynthesis; chorismate from D-erythrose 4-phosphate and phosphoenolpyruvate: step 3/7. In terms of biological role, catalyzes a trans-dehydration via an enolate intermediate. In Cellvibrio japonicus (strain Ueda107) (Pseudomonas fluorescens subsp. cellulosa), this protein is 3-dehydroquinate dehydratase.